A 139-amino-acid polypeptide reads, in one-letter code: Bilirubin-inducible fluorescent protein UnaG (139 aa).

(4Z,15Z)-bilirubin IXalpha-binding positions include asparagine 57, threonine 61, serine 80, arginine 112, and 132-134 (RSY).

This sequence belongs to the calycin superfamily. Fatty-acid binding protein (FABP) family. As to quaternary structure, monomer. As to expression, detected in small-diameter muscle fibers from the white muscle layer from juvenile animals (glass eels) (at protein level). Detected in small-diameter muscle fibers from juvenile animals (glass eels).

Its subcellular location is the cytoplasm. Its function is as follows. Beta-barrel protein that binds unconjugated bilirubin with high affinity. Excitation of the bilirubin-bound protein gives rise to green fluorescence, both under normoxia and hypoxia. The apoprotein is not fluorescent. Does not emit fluorescence in the presence of ditauro-bilirubin, urobilin or biliverdin. The polypeptide is Bilirubin-inducible fluorescent protein UnaG (Anguilla japonica (Japanese eel)).